Reading from the N-terminus, the 502-residue chain is Cysteine protease RavZ (502 aa).

Short sequence motifs (LIR) lie at residues 9–23 (DKLI…GEQE) and 23–37 (ESDI…GDEK). Residues 49–325 (SIYPPETSWE…ESALTEGKTL (277 aa)) form a catalytic region region. Active-site residues include His176 and Asp197. Positions 211–217 (YFKGKYR) are alpha-3 helix. Cys258 is an active-site residue. Positions 326-431 (PVQLSEFIVA…VLPCVKFDDT (106 aa)) are membrane targeting region. Positions 429-443 (DDTIDDFVTIEKDEL) match the LIR 3 motif.

It localises to the secreted. Its subcellular location is the host cytoplasmic vesicle membrane. The catalysed reaction is [protein]-C-terminal L-amino acid-glycyl-phosphatidylethanolamide + H2O = a 1,2-diacyl-sn-glycero-3-phosphoethanolamine-N-glycine + [protein]-C-terminal &lt;stereo&gt;L-&lt;/stereo&gt;amino acid. It catalyses the reaction [protein]-C-terminal L-amino acid-glycyl-phosphatidylserine + H2O = 1,2-diacyl-sn-glycero-3-phospho-L-serine-N-glycine + [protein]-C-terminal &lt;stereo&gt;L-&lt;/stereo&gt;amino acid. Functionally, cysteine protease effector that inhibits host cell autophagy by targeting lipid-conjugated ATG8 family proteins on pre-autophagosomal structures. Specifically hydrolyzes the amide bond between the C-terminal glycine residue and an adjacent aromatic residue in ATG8 proteins conjugated to phosphatidylethanolamine (PE), producing an ATG8 protein that cannot be reconjugated by host ATG7 and ATG3. Mechanistically, Ravz interacts with ATG8 proteins conjugated to PE via its LIR motifs, extracts them from the membrane of autophagosomes and integrates the PE part into its own lipid-binding site. It then removes the lipid component of the ATG8 protein. Also able to mediate delipidation of ATG8 proteins conjugated to phosphatidylserine (PS) during non-canonical autophagy. Inhibits host ubiquitin recruitment to bacteria-containing vacuoles, suggesting that it is able to mediate delipidation of other proteins in addition to ATG8 proteins. It is however not involved in the exclusion of autophagy adapters from bacteria-containing vacuoles decorated with ubiquitin. The sequence is that of Cysteine protease RavZ from Legionella pneumophila subsp. pneumophila (strain Philadelphia 1 / ATCC 33152 / DSM 7513).